We begin with the raw amino-acid sequence, 588 residues long: MTYQAPVRDIMFAIEHLSQWPQVEALQTYSEIELDDARAALEEFGRFCGEMIAPLSTIGDTEGARLENGRVVLPEGYKTAYDQFVDMGWQSLSHPAEHGGMGLPKVVGAAATEIVNSADMSFGLCPLLTNGAIDALSITGSDAQKAFYLDKLITGRWSGTMNLTEPQAGSDLSRVRCTAVPQDDGTYAISGTKIFITFGEHDLSENIVHLVLARTPDAPEGVRGLSLFVVPKLLAGEGGETSQRNTLGCVSLEHKLGVRASPTAVMEYDNATGYLVGEENSGLRYMFIMMTSARYAVGVQGVAIAERAYQHALSYARDRIQSRPVDGSAQDAVPIIQHPDVRRMLLRMRALTEGGRALAIATGGWLDLAEHGPEEARAEAQSMAEFLVPLVKGFCTERAVEVASLGVQIHGGMGFIEETGVAQFYRDARILPIYEGTTAIQANDLLGRKVLRDGGRTARRFAEMIAATEGELSKGGAAAQRIAQRLAEARAAFAAGLDHLLATAGQDPNRAYAGSVPFLMLTGNLATGWQLGLSALAAEAELAKGGDAEFLQAKIATADIFAQQVLVECSAEHSRITDTGDSLLTASL.

The active-site Proton acceptor is E435.

Belongs to the acyl-CoA dehydrogenase family. Requires FAD as cofactor.

The catalysed reaction is 3-(methylsulfanyl)propanoyl-CoA + oxidized [electron-transfer flavoprotein] + H(+) = 3-(methylsulfanyl)acryloyl-CoA + reduced [electron-transfer flavoprotein]. In terms of biological role, involved in the assimilation of dimethylsulphoniopropionate (DMSP), an important compound in the fixation of carbon in marine phytoplankton, by mediating the conversion of 3-(methylthio)propanoyl-CoA (MMPA-CoA) to 3-(methylthio)acryloyl-CoA (MTA-CoA). This Ruegeria pomeroyi (strain ATCC 700808 / DSM 15171 / DSS-3) (Silicibacter pomeroyi) protein is 3-methylmercaptopropionyl-CoA dehydrogenase.